Consider the following 330-residue polypeptide: Probable aldo-keto reductase 6 (330 aa).

Residue Tyr64 is the Proton donor of the active site. His132 serves as a coordination point for substrate. NADP(+) is bound at residue 211 to 221; that stretch reads SPLGRGFLGLP.

The protein belongs to the aldo/keto reductase family.

The polypeptide is Probable aldo-keto reductase 6 (Arabidopsis thaliana (Mouse-ear cress)).